A 1073-amino-acid chain; its full sequence is Probable nuclear hormone receptor HR38 (1073 aa).

Disordered regions lie at residues 55–87, 150–185, 263–326, 437–458, 492–514, 529–579, and 618–640; these read NLNAPTHQQSHTSHLQHAQQHQTHQQHPLLPPP, TPAPPATEPRKIKPLGAGKLKVGKTDSNSDSNSNCD, TQTA…LVSP, ALHAQQQQQQQQQQQQQQQQHQ, KYNSSSGSSPQQASSSSTAAPTP, PPLS…NSGG, and GQQQQQQQQSYQQHNYNSHNGER. Composition is skewed to low complexity over residues 59-82, 175-185, and 263-277; these read PTHQQSHTSHLQHAQQHQTHQQHP, DSNSDSNSNCD, and TQTASTTTTTSASAA. The span at 279-291 shows a compositional bias: basic residues; it reads HHQHHNHLLHQQH. Low complexity-rich tracts occupy residues 292 to 326, 441 to 458, and 495 to 514; these read HNQQQQQQQQQQQQQQQQQQQEHLQQQHQQQLVSP, QQQQQQQQQQQQQQQQHQ, and SSSGSSPQQASSSSTAAPTP. The segment covering 619–636 has biased composition (low complexity); that stretch reads QQQQQQQQSYQQHNYNSH. A DNA-binding region (nuclear receptor) is located at residues 741–816; sequence SQLCAVCGDT…VGMVKEVVRT (76 aa). NR C4-type zinc fingers lie at residues 744 to 764 and 780 to 804; these read CAVCGDTAACQHYGVRTCEGC and CLADKNCPVDKRRRNRCQFCRFQKC. The segment at 819-841 is disordered; the sequence is LKGRRGRLPSKPKSPQESPPSPP. Positions 840–1070 constitute an NR LBD domain; that stretch reads PPISLITALV…ALIENMFVTT (231 aa).

This sequence belongs to the nuclear hormone receptor family. NR4 subfamily. In terms of assembly, forms a heterodimer with USP. As to expression, ubiquitously expressed in preblastoderm embryos, specifically in central nervous system and intestinal tract. Highly expressed in third instar larval imaginal disks and brain complexes, but not in ovaries.

Its subcellular location is the nucleus. In terms of biological role, binds to NGFI-B response elements. Plays an important role in late stages of epidermal metamorphosis. This is Probable nuclear hormone receptor HR38 (Hr38) from Drosophila melanogaster (Fruit fly).